The sequence spans 326 residues: MSHDWTDNRKNLMLFAGRAHPELAEQVAKELDVHVTSQDAREFANGEIFVRFHESVRGCDAFVLQSCPAPVNRWLMEQLIMIDALKRGSAKRITAVMPFYPYARQDKKHRGREPISARLIADLLKTAGADRIVTVDLHTDQIQGFFDGPVDHMRGQNLLTGYIRDNYPDGNMVVVSPDSGRVRIAEKWADALGGVPLAFIHKTRDPRVPNQVVSNRVVGDVAGRTCVLIDDMIDTGGTIAGAVALLHNDGAGDVIIAATHGVLSDPAAQRLASCGAREVIVTNTLPIGEDKRFPQLTVLSIAPLLASTIRAVFENGSVTGLFDGDA.

Residues 45-47 and 104-105 each bind ATP; these read NGE and RQ. Histidine 138 and aspartate 178 together coordinate Mg(2+). Lysine 202 is an active-site residue. D-ribose 5-phosphate-binding positions include arginine 204, aspartate 230, and 234 to 238; that span reads DTGGT.

It belongs to the ribose-phosphate pyrophosphokinase family. Class I subfamily. In terms of assembly, homohexamer. It depends on Mg(2+) as a cofactor.

The protein resides in the cytoplasm. The enzyme catalyses D-ribose 5-phosphate + ATP = 5-phospho-alpha-D-ribose 1-diphosphate + AMP + H(+). It participates in metabolic intermediate biosynthesis; 5-phospho-alpha-D-ribose 1-diphosphate biosynthesis; 5-phospho-alpha-D-ribose 1-diphosphate from D-ribose 5-phosphate (route I): step 1/1. Its function is as follows. Involved in the biosynthesis of the central metabolite phospho-alpha-D-ribosyl-1-pyrophosphate (PRPP) via the transfer of pyrophosphoryl group from ATP to 1-hydroxyl of ribose-5-phosphate (Rib-5-P). The chain is Ribose-phosphate pyrophosphokinase from Mycobacterium bovis (strain ATCC BAA-935 / AF2122/97).